The following is a 321-amino-acid chain: tRNA(Ile)-lysidine synthase (321 aa).

30 to 35 (SGGSDS) serves as a coordination point for ATP.

Belongs to the tRNA(Ile)-lysidine synthase family.

It localises to the cytoplasm. The enzyme catalyses cytidine(34) in tRNA(Ile2) + L-lysine + ATP = lysidine(34) in tRNA(Ile2) + AMP + diphosphate + H(+). In terms of biological role, ligates lysine onto the cytidine present at position 34 of the AUA codon-specific tRNA(Ile) that contains the anticodon CAU, in an ATP-dependent manner. Cytidine is converted to lysidine, thus changing the amino acid specificity of the tRNA from methionine to isoleucine. This Chlamydia trachomatis serovar D (strain ATCC VR-885 / DSM 19411 / UW-3/Cx) protein is tRNA(Ile)-lysidine synthase.